A 22-amino-acid polypeptide reads, in one-letter code: Pectinesterase (22 aa).

Asp6 acts as the Proton donor in catalysis. Substrate is bound by residues Arg19 and Trp21.

This sequence belongs to the pectinesterase family.

Its subcellular location is the secreted. It localises to the cell wall. The enzyme catalyses [(1-&gt;4)-alpha-D-galacturonosyl methyl ester](n) + n H2O = [(1-&gt;4)-alpha-D-galacturonosyl](n) + n methanol + n H(+). It functions in the pathway glycan metabolism; pectin degradation; 2-dehydro-3-deoxy-D-gluconate from pectin: step 1/5. The chain is Pectinesterase from Capsicum chinense (Scotch bonnet).